The following is an 88-amino-acid chain: YcgL domain-containing protein NTHI1684 (88 aa).

Residues 1 to 85 enclose the YcgL domain; sequence MLCAIYKSKK…QDDGLFNSLS (85 aa).

This is YcgL domain-containing protein NTHI1684 from Haemophilus influenzae (strain 86-028NP).